Here is a 331-residue protein sequence, read N- to C-terminus: Cathepsin S (331 aa).

Positions 1-16 are cleaved as a signal peptide; the sequence is MKRLVCVLLVCSSAVA. A propeptide spans 17-114 (activation peptide); that stretch reads QLHKDPTLDH…ITYKSNPNRI (98 aa). N-linked (GlcNAc...) asparagine glycosylation occurs at Asn-104. 4 disulfide bridges follow: Cys-126–Cys-224, Cys-136–Cys-180, Cys-170–Cys-213, and Cys-272–Cys-320. The active site involves Cys-139. Active-site residues include His-278 and Asn-298.

This sequence belongs to the peptidase C1 family. Monomer.

Its subcellular location is the lysosome. It localises to the secreted. The protein localises to the cytoplasmic vesicle. The protein resides in the phagosome. It carries out the reaction Similar to cathepsin L, but with much less activity on Z-Phe-Arg-|-NHMec, and more activity on the Z-Val-Val-Arg-|-Xaa compound.. Functionally, thiol protease. Key protease responsible for the removal of the invariant chain from MHC class II molecules and MHC class II antigen presentation. The bond-specificity of this proteinase is in part similar to the specificities of cathepsin L. In Homo sapiens (Human), this protein is Cathepsin S (CTSS).